We begin with the raw amino-acid sequence, 193 residues long: dCTP deaminase, dUMP-forming (193 aa).

DCTP is bound by residues 101-106 (KSSLGR), Asp119, 127-129 (TLE), Gln148, Tyr162, and Gln174. Glu129 serves as the catalytic Proton donor/acceptor.

The protein belongs to the dCTP deaminase family. As to quaternary structure, homotrimer.

It catalyses the reaction dCTP + 2 H2O = dUMP + NH4(+) + diphosphate. It participates in pyrimidine metabolism; dUMP biosynthesis; dUMP from dCTP: step 1/1. Bifunctional enzyme that catalyzes both the deamination of dCTP to dUTP and the hydrolysis of dUTP to dUMP without releasing the toxic dUTP intermediate. This Bifidobacterium adolescentis (strain ATCC 15703 / DSM 20083 / NCTC 11814 / E194a) protein is dCTP deaminase, dUMP-forming.